The primary structure comprises 726 residues: Delta-1-pyrroline-5-carboxylate synthase B (726 aa).

Residues 1–296 (MTEIDRSRAF…WAPVVDTTSR (296 aa)) are glutamate 5-kinase. Positions 60, 157, and 176 each coordinate substrate. ATP is bound by residues 196-197 (SD) and 236-242 (RGGMTAK). The gamma-glutamyl phosphate reductase stretch occupies residues 297 to 717 (DMAVAARESS…YTHKDLPVLQ (421 aa)).

It in the N-terminal section; belongs to the glutamate 5-kinase family. In the C-terminal section; belongs to the gamma-glutamyl phosphate reductase family.

The enzyme catalyses L-glutamate + ATP = L-glutamyl 5-phosphate + ADP. It carries out the reaction L-glutamate 5-semialdehyde + phosphate + NADP(+) = L-glutamyl 5-phosphate + NADPH + H(+). It functions in the pathway amino-acid biosynthesis; L-proline biosynthesis; L-glutamate 5-semialdehyde from L-glutamate: step 1/2. It participates in amino-acid biosynthesis; L-proline biosynthesis; L-glutamate 5-semialdehyde from L-glutamate: step 2/2. Its function is as follows. P5CS plays a key role in proline biosynthesis, leading to osmoregulation in plants. This Arabidopsis thaliana (Mouse-ear cress) protein is Delta-1-pyrroline-5-carboxylate synthase B (P5CSB).